A 573-amino-acid chain; its full sequence is Potassium-transporting ATPase potassium-binding subunit (573 aa).

10 helical membrane passes run 3 to 23 (AEGLLQILLYLGLLAAVTPLL), 65 to 85 (GYTLALLSFNLLGLLLLYALL), 136 to 156 (GLTVQNFVSAATGIAVAVALI), 179 to 199 (LYVLLPLAFLGALVLVWQGVP), 254 to 274 (LTNLLESFYLLMIAAALIYSF), 286 to 306 (ALWTAVFILFVAGLAVTWWAE), 383 to 403 (AGLYGLLVFVILAVFIAGLMV), 423 to 443 (VIAVLVFPLGILGGAALTTVV), 489 to 509 (GLGLAMLLGRFAVIVPTLAIA), and 531 to 551 (LFITLLIATILIVGGLTFFPA).

The protein belongs to the KdpA family. As to quaternary structure, the system is composed of three essential subunits: KdpA, KdpB and KdpC.

It is found in the cell inner membrane. Part of the high-affinity ATP-driven potassium transport (or Kdp) system, which catalyzes the hydrolysis of ATP coupled with the electrogenic transport of potassium into the cytoplasm. This subunit binds the periplasmic potassium ions and delivers the ions to the membrane domain of KdpB through an intramembrane tunnel. This Rhodospirillum centenum (strain ATCC 51521 / SW) protein is Potassium-transporting ATPase potassium-binding subunit.